Here is a 64-residue protein sequence, read N- to C-terminus: Phylloxin-S1 (64 aa).

Residues 1–22 (MVFLKKSLLLVLFVGLVSLSIC) form the signal peptide. The propeptide occupies 23-44 (EENKREEHEEVEENAEKAEEKR). Residue Gln63 is modified to Glutamine amide.

Expressed by the skin glands.

It is found in the secreted. Its function is as follows. Antimicrobial peptide against both Gram-positive and Gram-negative bacteria. This is Phylloxin-S1 from Phyllomedusa sauvagei (Sauvage's leaf frog).